The following is a 115-amino-acid chain: NADH-ubiquinone oxidoreductase chain 3 (115 aa).

3 helical membrane passes run 4–24 (MLAM…AFWL), 55–75 (FFLV…LLPL), and 84–104 (MITT…GLSY).

It belongs to the complex I subunit 3 family. In terms of assembly, core subunit of respiratory chain NADH dehydrogenase (Complex I) which is composed of 45 different subunits. Interacts with TMEM186. Interacts with TMEM242.

It is found in the mitochondrion inner membrane. The catalysed reaction is a ubiquinone + NADH + 5 H(+)(in) = a ubiquinol + NAD(+) + 4 H(+)(out). In terms of biological role, core subunit of the mitochondrial membrane respiratory chain NADH dehydrogenase (Complex I) which catalyzes electron transfer from NADH through the respiratory chain, using ubiquinone as an electron acceptor. Essential for the catalytic activity of complex I. This is NADH-ubiquinone oxidoreductase chain 3 from Reithrodon auritus (Bunny rat).